The primary structure comprises 248 residues: Ubiquinone biosynthesis O-methyltransferase (248 aa).

Residues Arg41, Gly72, Asp93, and Met136 each coordinate S-adenosyl-L-methionine.

The protein belongs to the methyltransferase superfamily. UbiG/COQ3 family.

The enzyme catalyses a 3-demethylubiquinol + S-adenosyl-L-methionine = a ubiquinol + S-adenosyl-L-homocysteine + H(+). The catalysed reaction is a 3-(all-trans-polyprenyl)benzene-1,2-diol + S-adenosyl-L-methionine = a 2-methoxy-6-(all-trans-polyprenyl)phenol + S-adenosyl-L-homocysteine + H(+). It functions in the pathway cofactor biosynthesis; ubiquinone biosynthesis. Functionally, O-methyltransferase that catalyzes the 2 O-methylation steps in the ubiquinone biosynthetic pathway. This chain is Ubiquinone biosynthesis O-methyltransferase, found in Rhizobium rhizogenes (strain K84 / ATCC BAA-868) (Agrobacterium radiobacter).